A 390-amino-acid polypeptide reads, in one-letter code: Serpin B4 (390 aa).

Residue methionine 1 is modified to N-acetylmethionine.

This sequence belongs to the serpin family. Ov-serpin subfamily. Squamous cells.

It localises to the cytoplasm. Functionally, may act as a protease inhibitor to modulate the host immune response against tumor cells. This Homo sapiens (Human) protein is Serpin B4 (SERPINB4).